The primary structure comprises 1449 residues: DNA polymerase III PolC-type (1449 aa).

The interval 194-231 (AQEKPVKKESSDNKHKSNGGNKGGYEKKSYKDEPKNEN) is disordered. 2 stretches are compositionally biased toward basic and acidic residues: residues 197–208 (KPVKKESSDNKH) and 217–229 (GYEK…EPKN). Positions 435–590 (YVVFDIETTG…DDAKATAEIL (156 aa)) constitute an Exonuclease domain.

Belongs to the DNA polymerase type-C family. PolC subfamily.

It localises to the cytoplasm. The catalysed reaction is DNA(n) + a 2'-deoxyribonucleoside 5'-triphosphate = DNA(n+1) + diphosphate. Its function is as follows. Required for replicative DNA synthesis. This DNA polymerase also exhibits 3' to 5' exonuclease activity. The polypeptide is DNA polymerase III PolC-type (Clostridium perfringens (strain 13 / Type A)).